The primary structure comprises 85 residues: Neurotoxin beta-KTx 14.3 (85 aa).

The signal sequence occupies residues 1-20 (MKQYIFFLALIVLTATFAEA). Positions 21-37 (GKKTEILDKVKKVFSKG) are excised as a propeptide. The 37-residue stretch at 49 to 85 (ELGCPFIEKWCEDHCESKKQVGKCENFDCSCVKLGGK) folds into the BetaSPN-type CS-alpha/beta domain. Disulfide bonds link Cys-52/Cys-72, Cys-59/Cys-77, and Cys-63/Cys-79.

It belongs to the long chain scorpion toxin family. Class 2 subfamily. Expressed by the venom gland.

The protein localises to the secreted. Functionally, toxin with activity on voltage-gated potassium channels. Moderately and reversibly blocks up to 50% of the activity of Kv7.1/KCNQ1 (tested at 22 uM). 3D-structure modeling of the KCNQ1-toxin complex shows that the toxin interacts with the channel pore domain. Additionally, shows a very weak effect to block voltage-gated potassium channel Kv1.1/KCNA1. Has a very weak effect to block voltage-gated potassium channel Kv1.1/KCNA1. The sequence is that of Neurotoxin beta-KTx 14.3 from Lychas mucronatus (Chinese swimming scorpion).